A 234-amino-acid polypeptide reads, in one-letter code: uncharacterized protein (234 aa).

A run of 3 helical transmembrane segments spans residues 32-52, 62-82, and 106-126; these read GLRT…VSVL, IPAQ…LKEG, and QGLF…NIAL.

It belongs to the MgtC/SapB family.

The protein localises to the cell membrane. This is an uncharacterized protein from Synechocystis sp. (strain ATCC 27184 / PCC 6803 / Kazusa).